Here is a 160-residue protein sequence, read N- to C-terminus: Cytochrome b6-f complex subunit 4 (160 aa).

Helical transmembrane passes span 36 to 56, 95 to 115, and 131 to 151; these read LLYI…GLAV, LLGV…PFIE, and ILFL…TFPI.

Belongs to the cytochrome b family. PetD subfamily. In terms of assembly, the 4 large subunits of the cytochrome b6-f complex are cytochrome b6, subunit IV (17 kDa polypeptide, petD), cytochrome f and the Rieske protein, while the 4 small subunits are petG, petL, petM and petN. The complex functions as a dimer.

The protein resides in the plastid. It localises to the chloroplast thylakoid membrane. Component of the cytochrome b6-f complex, which mediates electron transfer between photosystem II (PSII) and photosystem I (PSI), cyclic electron flow around PSI, and state transitions. The polypeptide is Cytochrome b6-f complex subunit 4 (Chlamydomonas moewusii (Chlamydomonas eugametos)).